Reading from the N-terminus, the 283-residue chain is MAEITASLVKELRERTAAGMMECKKALVEANGDIELAIENMRKSGAIKAAKKAGNVAADGVIKTKIDGNYAVILEVNCQTDFVAKDGGFQAFADKVLDAAVAGKITDVDVLKAQFEEERVALVAKIGENINIRRVSALEGEVLGNYQHGARIGVLVAAKGADEELVKHLAMHVAASKPEFVKPEDVSAEVVAKEYQVQLEIAMQSGKPKEIAEKMVEGRMKKFTGEVSLTGQPFVMDPAKSVGQLLKEHNADVTNFIRFEVGEGIEKVETDFAAEVAAMSKQS.

The involved in Mg(2+) ion dislocation from EF-Tu stretch occupies residues 80-83 (TDFV).

The protein belongs to the EF-Ts family.

It is found in the cytoplasm. In terms of biological role, associates with the EF-Tu.GDP complex and induces the exchange of GDP to GTP. It remains bound to the aminoacyl-tRNA.EF-Tu.GTP complex up to the GTP hydrolysis stage on the ribosome. The chain is Elongation factor Ts from Pectobacterium atrosepticum (strain SCRI 1043 / ATCC BAA-672) (Erwinia carotovora subsp. atroseptica).